The following is a 1424-amino-acid chain: Putative disease resistance protein At3g14460 (1424 aa).

An NB-ARC domain is found at 152–454 (WRQASRSRPD…AIDLLYQPRS (303 aa)). Position 200–207 (200–207 (GMPGVGKT)) interacts with ATP. LRR repeat units follow at residues 498-523 (VSGD…HFSF), 552-571 (PTSL…LLNA), 572-595 (LSGL…LKGL), 597-618 (LLRY…VCTL), 620-641 (NLQT…SIAE), 642-665 (LINL…IKKL), and 806-830 (LPSL…FFFG). Disordered stretches follow at residues 911-977 (FRRS…PKDR) and 1050-1070 (IKSS…QYDD). Composition is skewed to polar residues over residues 912 to 927 (RRSL…SIPS) and 934 to 972 (SSPT…SLSS). LRR repeat units follow at residues 1090-1114 (PQNL…LTES), 1118-1139 (LHEL…HPPT), 1238-1262 (TPKL…LFGL), 1264-1286 (SLLS…GFPS), and 1310-1336 (LENL…LLPK).

This sequence belongs to the disease resistance NB-LRR family.

Its function is as follows. Potential disease resistance protein. This is Putative disease resistance protein At3g14460 from Arabidopsis thaliana (Mouse-ear cress).